A 1241-amino-acid chain; its full sequence is MMENWPKKPEGSQWTDDQWKAVVANGRDILVAAAAGSGKTAVLVERIIKKIINEENPVDVDRLLVVTFTNAAAQEMKNRIGEALEKVLIDEPGSQHVRKQLSLLNKASISTIHSFCLQVIRGYYYMLDVDPRFRIANQTENELLKEEVLDDILEEEYGIEDNTIFFELVDRYTSDRSDDDLQRMILALHTESRAHPNPEKWLDKLVEAYDVEGKTIEDLVYASYLLEDVKFQLETAEQHIRKATELAMLPDGPAPRVETLQADLALLGTLSSAARESWTSVYEAMQNVSWQTLKRIKKSDYNEDIVKQVDSLRNKAKDEVKKLQEELFSRRPESFLRDFQDMHPVLEKLVQLVKVFTGRFQAMKRDKGMVDFTDLEHFCLQILSEQSEDGEMKPSAVALQYRNKFAEVLVDEYQDTNFVQESIIKFVTKDSESEGNLFMVGDVKQSIYRFRLAEPGLFLGKYKRFTQEGLGGGMKIDLAKNFRSRHEVLAGTNFIFKQIMGEEVGEIDYDADAELKLGASYPEGEDVAAELLCIQQTEEEVIDGEEGAEVEKAQLEARLMAQRIKAMVDSGYEVYDRKTDSMRPVQYRDFVILLRSMPWAPQIMEELKLQGIPVYADLATGYFEATEVNIMMNVFRVIDNPMQDIPLAAVLRSPIVGLNDEELATLRAHGKKGSFYEVMSSFLKGAPLEEEKELHDKLEWFYNLLQGWREFARQQSLSDLIWKVYGETGYYDFVGGLPAGKQRQANLRVLYDRARQYEATSFRGLFRFLRFIERILERGDDMGTARALGEQEDVVRIMTIHKSKGLEFPVVFVAGLGRRFNTQDLMKRFLLHKDFGFGSQFIDPRKRIKYTTLSQLAIKRKMKMELIAEEMRVLYVALTRAKEKLILIGTVKDANKEMEKWLDAREHSEWLLPDHIRAGASCYLDWIAPSLYRHRDSEMLLELGQGSIPDEIYGYDTSWKVEVVDGNTLLAPEPVQEEKQELLEALREKKAVPLESERKEEVYDRLMWKYGYEEATSHRAKQSVTEIKRNYQSEEGSDNAFIKKLRAPIRTRPRFMEKKGLTYAERGTAVHAVMQHVDLKKPVTVEVLQEQIAGMVNKELLTFEQAEEIAIEKVISFFDSDLGKRVLAAKSVEREVPFTMMLAAEEAYQDWQGESGESILVQGVIDCMIEEEDGITLIDFKTDTIEGKFPGGFDQAKPILEVRYKVQLSLYAKALEKSLQHPVKEKCLYFFDGNHVIKVEE.

The UvrD-like helicase ATP-binding domain occupies 12 to 485 (SQWTDDQWKA…IDLAKNFRSR (474 aa)). 33 to 40 (AAAGSGKT) provides a ligand contact to ATP. Residues 505-805 (GEIDYDADAE…RIMTIHKSKG (301 aa)) form the UvrD-like helicase C-terminal domain.

The protein belongs to the helicase family. AddA subfamily. Heterodimer of AddA and AddB/RexB. Mg(2+) is required as a cofactor.

It catalyses the reaction Couples ATP hydrolysis with the unwinding of duplex DNA by translocating in the 3'-5' direction.. The enzyme catalyses ATP + H2O = ADP + phosphate + H(+). Functionally, the heterodimer acts as both an ATP-dependent DNA helicase and an ATP-dependent, dual-direction single-stranded exonuclease. Recognizes the chi site generating a DNA molecule suitable for the initiation of homologous recombination. The AddA nuclease domain is required for chi fragment generation; this subunit has the helicase and 3' -&gt; 5' nuclease activities. This chain is ATP-dependent helicase/nuclease subunit A, found in Bacillus cereus (strain ZK / E33L).